The primary structure comprises 223 residues: Ribonuclease 3 (223 aa).

One can recognise an RNase III domain in the interval 4–127; the sequence is YSQLEKRLNY…IIGAVYLEAG (124 aa). Residue Glu40 participates in Mg(2+) binding. Asp44 is an active-site residue. Residues Asn113 and Glu116 each contribute to the Mg(2+) site. The active site involves Glu116. In terms of domain architecture, DRBM spans 154–223; sequence DYKTALQELT…AKIALEALKK (70 aa).

The protein belongs to the ribonuclease III family. In terms of assembly, homodimer. Mg(2+) serves as cofactor.

The protein resides in the cytoplasm. It catalyses the reaction Endonucleolytic cleavage to 5'-phosphomonoester.. In terms of biological role, digests double-stranded RNA. Involved in the processing of primary rRNA transcript to yield the immediate precursors to the large and small rRNAs (23S and 16S). Processes some mRNAs, and tRNAs when they are encoded in the rRNA operon. Processes pre-crRNA and tracrRNA of type II CRISPR loci if present in the organism. This Sulfurovum sp. (strain NBC37-1) protein is Ribonuclease 3.